A 255-amino-acid chain; its full sequence is Small ribosomal subunit protein eS1B (255 aa).

Position 2 is an N-acetylalanine; partial (A2). S245 carries the phosphoserine modification. Residue K248 forms a Glycyl lysine isopeptide (Lys-Gly) (interchain with G-Cter in ubiquitin) linkage. A Phosphothreonine modification is found at T254.

The protein belongs to the eukaryotic ribosomal protein eS1 family. As to quaternary structure, component of the small ribosomal subunit. Mature ribosomes consist of a small (40S) and a large (60S) subunit. The 40S subunit contains about 33 different proteins and 1 molecule of RNA (18S). The 60S subunit contains about 49 different proteins and 3 molecules of RNA (25S, 5.8S and 5S).

Its subcellular location is the cytoplasm. The polypeptide is Small ribosomal subunit protein eS1B (Saccharomyces cerevisiae (strain JAY291) (Baker's yeast)).